We begin with the raw amino-acid sequence, 242 residues long: MGAKQSGPAAANGRTRAYSGSDLPSSSSGGANGTAGGGGGARAAAAGRFPAQVPSAHQPSASGGAAAAAAAPAAPAAPRSRSLGGAVGSVASGARAAQSPFSIPNSSSGPYGSQDSVHSSPEDGGGGRDRPVGGSPGGPRLVIGSLPAHLSPHMFGGFKCPVCSKFVSSDEMDLHLVMCLTKPRITYNEDVLSKDAGECAICLEELQQGDTIARLPCLCIYHKGCIDEWFEVNRSCPEHPSD.

The segment at 1–141 (MGAKQSGPAA…VGGSPGGPRL (141 aa)) is disordered. Residue G2 is the site of N-myristoyl glycine attachment. A phosphoserine mark is found at S19, S21, and S25. The span at 19-29 (SGSDLPSSSSG) shows a compositional bias: low complexity. The segment covering 30–41 (GANGTAGGGGGA) has biased composition (gly residues). The segment covering 59 to 97 (PSASGGAAAAAAAPAAPAAPRSRSLGGAVGSVASGARAA) has biased composition (low complexity). S82, S89, S113, S116, and S135 each carry phosphoserine. A compositionally biased stretch (polar residues) spans 99 to 118 (SPFSIPNSSSGPYGSQDSVH). Residue S145 is modified to Phosphoserine; by MTOR. Residues S151 and S193 each carry the phosphoserine modification. The RING-type; atypical zinc-finger motif lies at 199-240 (CAICLEELQQGDTIARLPCLCIYHKGCIDEWFEVNRSCPEHP).

Interacts with UBE2N. Interacts with ZNRF1. Interacts (when phosphorylated) with YWHAE. Phosphorylated; leading to binding to YWHAE. Phosphorylated by MTOR at Ser-145 and dephosphorylated by PP6C. Ser-145 phosphorylation stimulates vesicle-to-cytosol translocation. Highly expressed in the brain, with higher expression during development than in adult. Expressed also in mammary glands, testis, colon and kidney.

The protein localises to the endosome membrane. It is found in the lysosome membrane. The protein resides in the presynaptic cell membrane. Its subcellular location is the cytoplasm. It carries out the reaction S-ubiquitinyl-[E2 ubiquitin-conjugating enzyme]-L-cysteine + [acceptor protein]-L-lysine = [E2 ubiquitin-conjugating enzyme]-L-cysteine + N(6)-ubiquitinyl-[acceptor protein]-L-lysine.. Its pathway is protein modification; protein ubiquitination. In terms of biological role, E3 ubiquitin-protein ligase that plays a role in the establishment and maintenance of neuronal transmission and plasticity. Ubiquitinates the Na(+)/K(+) ATPase alpha-1 subunit/ATP1A1 and thereby influences its endocytosis and/or degradation. Acts also as a positive regulator of mTORC1 activation by amino acids, which functions upstream of the V-ATPase and of Rag-GTPases. In turn, phosphorylation by mTOR leads to its inhibition via targeting to the cytosol allowing a self-regulating feedback mechanism. In Homo sapiens (Human), this protein is E3 ubiquitin-protein ligase ZNRF2 (ZNRF2).